Reading from the N-terminus, the 515-residue chain is 1-pyrroline-5-carboxylate dehydrogenase (515 aa).

Residues Glu-286 and Cys-320 contribute to the active site.

This sequence belongs to the aldehyde dehydrogenase family. RocA subfamily.

It carries out the reaction L-glutamate 5-semialdehyde + NAD(+) + H2O = L-glutamate + NADH + 2 H(+). It functions in the pathway amino-acid degradation; L-proline degradation into L-glutamate; L-glutamate from L-proline: step 2/2. The chain is 1-pyrroline-5-carboxylate dehydrogenase from Bacillus pumilus (strain SAFR-032).